The primary structure comprises 243 residues: Glycerophosphodiester phosphodiesterase (243 aa).

The region spanning 3 to 239 is the GP-PDE domain; sequence TLVIAHRGDS…DDPETLINLV (237 aa). His-8 (proton acceptor) is an active-site residue. Ca(2+) contacts are provided by Glu-35 and Asp-37. Residue His-50 is the Proton donor of the active site. Glu-110 contributes to the Ca(2+) binding site.

Belongs to the glycerophosphoryl diester phosphodiesterase family. As to quaternary structure, homodimer. Mg(2+) serves as cofactor. Requires Ca(2+) as cofactor.

The enzyme catalyses a sn-glycero-3-phosphodiester + H2O = an alcohol + sn-glycerol 3-phosphate + H(+). It catalyses the reaction sn-glycerol 3-phosphocholine + H2O = sn-glycerol 3-phosphate + choline + H(+). Its activity is regulated as follows. Inhibited by EDTA. In terms of biological role, glycerophosphodiester phosphodiesterase hydrolyzes glycerophosphodiesters into glycerol-3-phosphate (G3P) and the corresponding alcohol. Can use glycerophosphocholine. The chain is Glycerophosphodiester phosphodiesterase from Caldanaerobacter subterraneus subsp. tengcongensis (strain DSM 15242 / JCM 11007 / NBRC 100824 / MB4) (Thermoanaerobacter tengcongensis).